Reading from the N-terminus, the 32-residue chain is Cytochrome b6-f complex subunit 6 (32 aa).

Residues 6–26 (VFYIVFIALFFGIAVGIIFAI) traverse the membrane as a helical segment.

This sequence belongs to the PetL family. The 4 large subunits of the cytochrome b6-f complex are cytochrome b6, subunit IV (17 kDa polypeptide, PetD), cytochrome f and the Rieske protein, while the 4 small subunits are PetG, PetL, PetM and PetN. The complex functions as a dimer.

The protein resides in the cellular thylakoid membrane. Functionally, component of the cytochrome b6-f complex, which mediates electron transfer between photosystem II (PSII) and photosystem I (PSI), cyclic electron flow around PSI, and state transitions. PetL is important for photoautotrophic growth as well as for electron transfer efficiency and stability of the cytochrome b6-f complex. This is Cytochrome b6-f complex subunit 6 from Mastigocladus laminosus (Fischerella sp.).